A 122-amino-acid chain; its full sequence is Diacylglycerol kinase (122 aa).

Residues R10 and Y17 each coordinate ATP. Residues R10, 14-19 (AAGYSW), and 23-26 (RAAW) each bind substrate. Residue E29 coordinates ATP. Residue E29 participates in a divalent metal cation binding. Substrate contacts are provided by residues 31–35 (AFRQE), 48–51 (WLDV), R56, and E70. Residues 35-55 (EGVAVLLAVVIACWLDVDAIT) form a helical membrane-spanning segment. A helical transmembrane segment spans residues 57–77 (VLLISSVMLVMIVEILNSAIE). The active-site Proton acceptor is the E70. ATP contacts are provided by residues E77, 86–88 (EYH), and 95–96 (KD). E77 serves as a coordination point for a divalent metal cation. A helical transmembrane segment spans residues 98 to 118 (GSAAVLIAIIVAVITWCILLW). Residues S99 and 113-118 (WCILLW) each bind substrate.

The protein belongs to the bacterial diacylglycerol kinase family. Mg(2+) serves as cofactor.

Its subcellular location is the cell inner membrane. It catalyses the reaction a 1,2-diacyl-sn-glycerol + ATP = a 1,2-diacyl-sn-glycero-3-phosphate + ADP + H(+). Functionally, catalyzes the ATP-dependent phosphorylation of sn-l,2-diacylglycerol (DAG) to phosphatidic acid. Involved in the recycling of diacylglycerol produced as a by-product during membrane-derived oligosaccharide (MDO) biosynthesis. The polypeptide is Diacylglycerol kinase (dgkA) (Shigella flexneri).